The chain runs to 142 residues: Antirestriction protein KlcA (142 aa).

It belongs to the antirestriction protein family.

In terms of biological role, could be involved in overcoming restriction barriers during establishment after conjugative transfer. The sequence is that of Antirestriction protein KlcA (klcA) from Escherichia coli.